Here is a 240-residue protein sequence, read N- to C-terminus: Vacuolar-sorting protein SNF7 (240 aa).

Thr-72 bears the Phosphothreonine mark. Ser-119 and Ser-193 each carry phosphoserine. A disordered region spans residues 193–240 (SENKVSLPSVPSNKIKQSENSVKDGEEEEDEEDEDEKALRELQAEMGL). The segment covering 195–212 (NKVSLPSVPSNKIKQSEN) has biased composition (polar residues). Positions 217-228 (GEEEEDEEDEDE) are enriched in acidic residues. Lys-229 is covalently cross-linked (Glycyl lysine isopeptide (Lys-Gly) (interchain with G-Cter in ubiquitin)). Over residues 229–240 (KALRELQAEMGL) the composition is skewed to basic and acidic residues.

This sequence belongs to the SNF7 family. As to quaternary structure, core component of the ESCRT-III complex (endosomal sorting required for transport complex III). ESCRT-III appears to be sequentially assembled as a flat lattice on the endosome membrane and forms a transient 450 kDa complex that contains DID4, oligomerized SNF7, VPS20 and VPS24. SNF7 polymerizes into spirals at the surface of lipid bilayers. SNF7 polymerization is nucleated by association of SNF7 with VPS20; the process is terminated through association of VPS24, possibly by capping the SNF7 filament. Interacts with VTA1; the interaction requires DID2. Interacts with BRO1. Interacts with DOA4. Interacts with HEH1 and HEH2. Interacts with RIM20 and YGR122W.

It is found in the cytoplasm. The protein resides in the endosome membrane. The protein localises to the nucleus envelope. Its function is as follows. Acts a component of the ESCRT-III complex required for the sorting and concentration of proteins resulting in the entry of these proteins into the invaginating vesicles of the multivesicular body (MVB). The sequential action of ESCRT-0, -I, and -II together with the ordered assembly of ESCRT-III links membrane invagination to cargo sorting. Membrane scission in the neck of the growing vesicle releases mature, cargo-laden ILVs into the lumen. ESCRT-III is critical for late steps in MVB sorting, such as membrane invagination and final cargo sorting and recruitment of late-acting components of the sorting machinery. SNF7 is the most abundant ESCRT-III subunit which forms membrane-sculpting filaments with 30 Angstrom periodicity and a exposed cationic membrane-binding surface. Its activation requires a prominent conformational rearrangement to expose protein-membrane and protein-protein interfaces. SNF7 filaments then form spirals that could function as spiral springs. The elastic expansion of compressed SNF7 spirals generates an area difference between the two sides of the membrane and thus curvature which could be the origin of membrane deformation leading eventually to fission. SNF7 recruits BRO1, which in turn recruits DOA4, which deubiquitinates cargos before their enclosure within MVB vesicles. ESCRT-III is also recruited to the nuclear envelope (NE) by integral INM proteins to surveil and clear defective nuclear pore complex (NPC) assembly intermediates to ensure the fidelity of NPC assembly. This Saccharomyces cerevisiae (strain ATCC 204508 / S288c) (Baker's yeast) protein is Vacuolar-sorting protein SNF7.